Reading from the N-terminus, the 559-residue chain is Protochlorophyllide-dependent translocon component 52, chloroplastic (559 aa).

A chloroplast-targeting transit peptide spans 1–55; that stretch reads MEAALAACALPSLRILNTKPRFRCSFSNPSLPISPNSLITRKSSRFTTAVSSPPS. The disordered stretch occupies residues 44–70; it reads SRFTTAVSSPPSSSAATSTNSPPEPEA. A compositionally biased stretch (low complexity) spans 47–64; it reads TTAVSSPPSSSAATSTNS. Positions 85–195 constitute a Rieske domain; that stretch reads WYPVMPICDL…STVQHEIIWF (111 aa). The [2Fe-2S] cluster site is built by Cys-127, His-129, Cys-147, and His-150. 2 residues coordinate Fe cation: His-248 and His-253. Residues 483–486 carry the Redox-active motif motif; that stretch reads CSSC. Helical transmembrane passes span 493–513 and 525–545; these read LNAL…VMAV and IAVL…SHFI.

[2Fe-2S] cluster is required as a cofactor.

The protein resides in the plastid. It localises to the chloroplast inner membrane. The enzyme catalyses protochlorophyllide a + 4 reduced [2Fe-2S]-[ferredoxin] + 2 O2 + 5 H(+) = protochlorophyllide b + 4 oxidized [2Fe-2S]-[ferredoxin] + 3 H2O. With respect to regulation, down-regulated by light. Functionally, part of a translocon most abundantly expressed in etiolated plants and involved in the protochlorophyllide-dependent import of the precursor NADPH:protochlorophyllide oxidoreductase A (pPORA). The chain is Protochlorophyllide-dependent translocon component 52, chloroplastic from Arabidopsis thaliana (Mouse-ear cress).